The following is a 154-amino-acid chain: UPF0178 protein YaiI (154 aa).

This sequence belongs to the UPF0178 family.

This Escherichia coli (strain ATCC 8739 / DSM 1576 / NBRC 3972 / NCIMB 8545 / WDCM 00012 / Crooks) protein is UPF0178 protein YaiI.